The following is an 83-amino-acid chain: Cytochrome b559 subunit alpha (83 aa).

Residues 21–35 (VIHSITIPSLFIAGW) form a helical membrane-spanning segment. His23 is a heme binding site.

The protein belongs to the PsbE/PsbF family. Heterodimer of an alpha subunit and a beta subunit. PSII is composed of 1 copy each of membrane proteins PsbA, PsbB, PsbC, PsbD, PsbE, PsbF, PsbH, PsbI, PsbJ, PsbK, PsbL, PsbM, PsbT, PsbX, PsbY, PsbZ, Psb30/Ycf12, at least 3 peripheral proteins of the oxygen-evolving complex and a large number of cofactors. It forms dimeric complexes. Heme b is required as a cofactor.

The protein resides in the plastid. The protein localises to the chloroplast thylakoid membrane. Its function is as follows. This b-type cytochrome is tightly associated with the reaction center of photosystem II (PSII). PSII is a light-driven water:plastoquinone oxidoreductase that uses light energy to abstract electrons from H(2)O, generating O(2) and a proton gradient subsequently used for ATP formation. It consists of a core antenna complex that captures photons, and an electron transfer chain that converts photonic excitation into a charge separation. The polypeptide is Cytochrome b559 subunit alpha (Oenothera berteroana (Bertero's evening primrose)).